A 319-amino-acid chain; its full sequence is Acetyl esterase (319 aa).

The Involved in the stabilization of the negatively charged intermediate by the formation of the oxyanion hole signature appears at 91-93 (HGG). Catalysis depends on residues serine 165, aspartate 262, and histidine 292.

It belongs to the 'GDXG' lipolytic enzyme family. As to quaternary structure, homodimer. Interacts with MalT and MelA.

It localises to the cytoplasm. Its function is as follows. Displays esterase activity towards short chain fatty esters (acyl chain length of up to 8 carbons). Able to hydrolyze triacetylglycerol (triacetin) and tributyrylglycerol (tributyrin), but not trioleylglycerol (triolein) or cholesterol oleate. Negatively regulates MalT activity by antagonizing maltotriose binding. Inhibits MelA galactosidase activity. The chain is Acetyl esterase from Shigella flexneri.